Consider the following 459-residue polypeptide: Diaminopimelate decarboxylase (459 aa).

N6-(pyridoxal phosphate)lysine is present on Lys-89. Pyridoxal 5'-phosphate contacts are provided by residues Gly-271 and 313–316; that span reads EPGR. The substrate site is built by Arg-316, Arg-357, and Tyr-361. Cys-388 functions as the Proton donor in the catalytic mechanism. Substrate-binding residues include Glu-389 and Tyr-418. Pyridoxal 5'-phosphate is bound at residue Tyr-418.

This sequence belongs to the Orn/Lys/Arg decarboxylase class-II family. LysA subfamily. As to quaternary structure, homodimer. Pyridoxal 5'-phosphate is required as a cofactor.

The catalysed reaction is meso-2,6-diaminopimelate + H(+) = L-lysine + CO2. It functions in the pathway amino-acid biosynthesis; L-lysine biosynthesis via DAP pathway; L-lysine from DL-2,6-diaminopimelate: step 1/1. Specifically catalyzes the decarboxylation of meso-diaminopimelate (meso-DAP) to L-lysine. The protein is Diaminopimelate decarboxylase of Corynebacterium efficiens (strain DSM 44549 / YS-314 / AJ 12310 / JCM 11189 / NBRC 100395).